The sequence spans 244 residues: Aliphatic sulfonates import ATP-binding protein SsuB 2 (244 aa).

Residues V13–F229 form the ABC transporter domain. Residue G45–S52 coordinates ATP.

It belongs to the ABC transporter superfamily. Aliphatic sulfonates importer (TC 3.A.1.17.2) family. The complex is composed of two ATP-binding proteins (SsuB), two transmembrane proteins (SsuC) and a solute-binding protein (SsuA).

It is found in the cell membrane. It catalyses the reaction ATP + H2O + aliphatic sulfonate-[sulfonate-binding protein]Side 1 = ADP + phosphate + aliphatic sulfonateSide 2 + [sulfonate-binding protein]Side 1.. Part of the ABC transporter complex SsuABC involved in aliphatic sulfonates import. Responsible for energy coupling to the transport system. This Rhodococcus jostii (strain RHA1) protein is Aliphatic sulfonates import ATP-binding protein SsuB 2.